The primary structure comprises 398 residues: 4-hydroxy-3-methylbut-2-enyl diphosphate reductase (398 aa).

Cysteine 66 provides a ligand contact to [4Fe-4S] cluster. Histidine 96 serves as a coordination point for (2E)-4-hydroxy-3-methylbut-2-enyl diphosphate. Histidine 96 serves as a coordination point for dimethylallyl diphosphate. Position 96 (histidine 96) interacts with isopentenyl diphosphate. Position 157 (cysteine 157) interacts with [4Fe-4S] cluster. A (2E)-4-hydroxy-3-methylbut-2-enyl diphosphate-binding site is contributed by histidine 185. Histidine 185 provides a ligand contact to dimethylallyl diphosphate. Histidine 185 contacts isopentenyl diphosphate. The Proton donor role is filled by glutamate 187. Position 250 (threonine 250) interacts with (2E)-4-hydroxy-3-methylbut-2-enyl diphosphate. Cysteine 288 is a binding site for [4Fe-4S] cluster. Positions 317, 318, 319, and 380 each coordinate (2E)-4-hydroxy-3-methylbut-2-enyl diphosphate. Dimethylallyl diphosphate-binding residues include serine 317, serine 318, asparagine 319, and serine 380. 4 residues coordinate isopentenyl diphosphate: serine 317, serine 318, asparagine 319, and serine 380.

This sequence belongs to the IspH family. Requires [4Fe-4S] cluster as cofactor.

The catalysed reaction is isopentenyl diphosphate + 2 oxidized [2Fe-2S]-[ferredoxin] + H2O = (2E)-4-hydroxy-3-methylbut-2-enyl diphosphate + 2 reduced [2Fe-2S]-[ferredoxin] + 2 H(+). It catalyses the reaction dimethylallyl diphosphate + 2 oxidized [2Fe-2S]-[ferredoxin] + H2O = (2E)-4-hydroxy-3-methylbut-2-enyl diphosphate + 2 reduced [2Fe-2S]-[ferredoxin] + 2 H(+). It participates in isoprenoid biosynthesis; dimethylallyl diphosphate biosynthesis; dimethylallyl diphosphate from (2E)-4-hydroxy-3-methylbutenyl diphosphate: step 1/1. The protein operates within isoprenoid biosynthesis; isopentenyl diphosphate biosynthesis via DXP pathway; isopentenyl diphosphate from 1-deoxy-D-xylulose 5-phosphate: step 6/6. Functionally, catalyzes the conversion of 1-hydroxy-2-methyl-2-(E)-butenyl 4-diphosphate (HMBPP) into a mixture of isopentenyl diphosphate (IPP) and dimethylallyl diphosphate (DMAPP). Acts in the terminal step of the DOXP/MEP pathway for isoprenoid precursor biosynthesis. The polypeptide is 4-hydroxy-3-methylbut-2-enyl diphosphate reductase (Prochlorococcus marinus (strain MIT 9515)).